An 870-amino-acid chain; its full sequence is Phenylalanine--tRNA ligase beta subunit (870 aa).

In terms of domain architecture, tRNA-binding spans 39 to 148; the sequence is AADLQKFEVA…EDAVVGEPFT (110 aa). In terms of domain architecture, B5 spans 427-551; that stretch reads PAKKTLDFPA…RIYGYDKIES (125 aa). The RPE1 insert domain occupies 450–498; the sequence is LLHNEANKGEFVGNTEHSIAAYKEVREDASTGLTPKLPLEASYVKGLNI. Mg(2+) is bound by residues aspartate 529, aspartate 535, glutamate 538, and glutamate 539. In terms of domain architecture, FDX-ACB spans 776 to 869; that stretch reads SDYQANFRDY…IEQKFQGTLR (94 aa).

This sequence belongs to the phenylalanyl-tRNA synthetase beta subunit family. Type 1 subfamily. Tetramer of two alpha and two beta subunits. It depends on Mg(2+) as a cofactor.

It localises to the cytoplasm. It carries out the reaction tRNA(Phe) + L-phenylalanine + ATP = L-phenylalanyl-tRNA(Phe) + AMP + diphosphate + H(+). In Rickettsia bellii (strain RML369-C), this protein is Phenylalanine--tRNA ligase beta subunit (pheT).